Here is a 382-residue protein sequence, read N- to C-terminus: MAHEEKRPWEFSLSLPWELIEEILSRVPPESLLRFKTVSKQWNALFRDKTFINNHKMTFRFILATKSKIYSVSIDPKIVVRELTLDIPGLESHEIPKKLVDCDKLLLCDMEKGVVLWNPWLRHSTWIDQGSNHTRMESYGIGYNNKGSYKIFAFCDRKENHTQRLLTIHDSASDAWKDREPIDNSQGKQIVHNIYTKISGVSLNGNLYLVTYFETTDLVYHLIEINSSSESVVKFCDLPCGTSNFLKDAFVLRVFEGDRFSLLKQCHATKKIEIWVSKYKINNNLDRDVEWIKFMEVSSPNLPDLVDGFDSQPSYFIEDKRLVVCSCNETGRAWIYVFGENKLISKTQIDSVVDLWPSHWTFIPSLVPVPRAQREEPAELQV.

The 47-residue stretch at 9–55 folds into the F-box domain; that stretch reads WEFSLSLPWELIEEILSRVPPESLLRFKTVSKQWNALFRDKTFINNH. Kelch repeat units lie at residues 150–196 and 334–381; these read KIFA…NIYT and WIYV…AELQ.

The polypeptide is F-box/kelch-repeat protein At3g16580 (Arabidopsis thaliana (Mouse-ear cress)).